Here is a 312-residue protein sequence, read N- to C-terminus: Ribosomal RNA small subunit methyltransferase H (312 aa).

Residues 37-39 (GGH), D57, F83, and D104 contribute to the S-adenosyl-L-methionine site.

Belongs to the methyltransferase superfamily. RsmH family.

It is found in the cytoplasm. The catalysed reaction is cytidine(1402) in 16S rRNA + S-adenosyl-L-methionine = N(4)-methylcytidine(1402) in 16S rRNA + S-adenosyl-L-homocysteine + H(+). In terms of biological role, specifically methylates the N4 position of cytidine in position 1402 (C1402) of 16S rRNA. This chain is Ribosomal RNA small subunit methyltransferase H, found in Malacoplasma penetrans (strain HF-2) (Mycoplasma penetrans).